The sequence spans 567 residues: Arginine--tRNA ligase (567 aa).

Residues 121 to 131 (ANPNGPLHVGH) carry the 'HIGH' region motif.

It belongs to the class-I aminoacyl-tRNA synthetase family.

It is found in the cytoplasm. The enzyme catalyses tRNA(Arg) + L-arginine + ATP = L-arginyl-tRNA(Arg) + AMP + diphosphate. The polypeptide is Arginine--tRNA ligase (Methanococcoides burtonii (strain DSM 6242 / NBRC 107633 / OCM 468 / ACE-M)).